The following is a 133-amino-acid chain: MSQDFSREKRLLTPRHFKAVFDSPTGKVPGKNLLLLARNNDLDHPRLGLVIGKKSVKLSVERNRLKRLMRESFRLHQDSLVGWDIVIVARKGLGDVENPELIQHFGKLWKRLARNKPVPAVKTETVGVDSPDA.

This sequence belongs to the RnpA family. As to quaternary structure, consists of a catalytic RNA component (M1 or rnpB) and a protein subunit.

It catalyses the reaction Endonucleolytic cleavage of RNA, removing 5'-extranucleotides from tRNA precursor.. In terms of biological role, RNaseP catalyzes the removal of the 5'-leader sequence from pre-tRNA to produce the mature 5'-terminus. It can also cleave other RNA substrates such as 4.5S RNA. The protein component plays an auxiliary but essential role in vivo by binding to the 5'-leader sequence and broadening the substrate specificity of the ribozyme. The chain is Ribonuclease P protein component from Pseudomonas fluorescens (strain Pf0-1).